The primary structure comprises 463 residues: Nicotinate phosphoribosyltransferase pncB2 (463 aa).

The residue at position 202 (His202) is a Phosphohistidine.

The protein belongs to the NAPRTase family. In terms of processing, transiently phosphorylated on a His residue during the reaction cycle. Phosphorylation strongly increases the affinity for substrates and increases the rate of nicotinate D-ribonucleotide production. Dephosphorylation regenerates the low-affinity form of the enzyme, leading to product release.

The catalysed reaction is nicotinate + 5-phospho-alpha-D-ribose 1-diphosphate + ATP + H2O = nicotinate beta-D-ribonucleotide + ADP + phosphate + diphosphate. It functions in the pathway cofactor biosynthesis; NAD(+) biosynthesis; nicotinate D-ribonucleotide from nicotinate: step 1/1. Functionally, involved in the Preiss-Handler pathway, which is a recycling route that permits the salvage of free nicotinamide (NM) and nicotinic acid (Na) involved in the NAD biosynthesis. Catalyzes the synthesis of beta-nicotinate D-ribonucleotide from nicotinate and 5-phospho-D-ribose 1-phosphate at the expense of ATP. It is not able to use nicotinamide. PncB2 appears to be responsible for the increased salvage synthesis of NAD during infection of host tissues. The polypeptide is Nicotinate phosphoribosyltransferase pncB2 (pncB2) (Mycobacterium tuberculosis (strain CDC 1551 / Oshkosh)).